A 203-amino-acid chain; its full sequence is N-(5'-phosphoribosyl)anthranilate isomerase (203 aa).

The protein belongs to the TrpF family.

It catalyses the reaction N-(5-phospho-beta-D-ribosyl)anthranilate = 1-(2-carboxyphenylamino)-1-deoxy-D-ribulose 5-phosphate. The protein operates within amino-acid biosynthesis; L-tryptophan biosynthesis; L-tryptophan from chorismate: step 3/5. The protein is N-(5'-phosphoribosyl)anthranilate isomerase of Geotalea uraniireducens (strain Rf4) (Geobacter uraniireducens).